We begin with the raw amino-acid sequence, 93 residues long: Hematopoietic cell signal transducer (93 aa).

Positions 1-18 (MIHLGHILFLLLLPVAAA) are cleaved as a signal peptide. Over 19 to 48 (QTTPGERSSLPAFYPGTSGSCSGCGSLSLP) the chain is Extracellular. Residues 49 to 69 (LLAGLVAADAVASLLIVGAVF) traverse the membrane as a helical segment. Topologically, residues 70-93 (LCARPRRSPAQEDGKVYINMPGRG) are cytoplasmic. Y86 carries the phosphotyrosine modification. Positions 86 to 88 (YIN) are GRB2 binding site. The PIK3R1 binding site stretch occupies residues 86–89 (YINM).

Belongs to the DAP10 family. In terms of assembly, interacts with CLEC5A. Forms an CLEC5A/TYROBP/HCST trimolecular complex depending almost solely on TYROBP. Homodimer; Disulfide-linked. Heterohexamer composed of four subunits of HCST/DAP10 and two subunits of KLRK1. Interacts (via transmembrane domain) with KLRK1 (via transmembrane domain); the interaction is required for KLRK1 NK cell surface and induces NK cell-mediated cytotoxicity. Interacts with PIK3R1 and GRB2. Interacts with CD300H. Phosphorylated; PIK3R1 and GRB2 associate specifically with tyrosine-phosphorylated HCST. Post-translationally, O-glycosylated. In terms of tissue distribution, predominantly expressed in hemopoietic cells such as NK cells, subset of T-cells and monocytes. Detected in leukocytes, spleen, and thymus.

It localises to the membrane. Functionally, transmembrane adapter protein which associates with KLRK1 to form an activation receptor KLRK1-HCST in lymphoid and myeloid cells; this receptor plays a major role in triggering cytotoxicity against target cells expressing cell surface ligands such as MHC class I chain-related MICA and MICB, and UL16-binding proteins (ULBPs); these ligands are up-regulated by stress conditions and pathological state such as viral infection and tumor transformation. Functions as a docking site for PI3-kinase PIK3R1 and GRB2. Interaction of ULBPs with KLRK1-HCST triggers calcium mobilization and activation of the PIK3R1, MAP2K/ERK, and JAK2/STAT5 signaling pathways. Both PIK3R1 and GRB2 are required for full KLRK1-HCST-mediated activation and ultimate killing of target cells. In NK cells, KLRK1-HCST signaling directly induces cytotoxicity and enhances cytokine production initiated via DAP12/TYROBP-associated receptors. In T-cells, it provides primarily costimulation for TCR-induced signals. KLRK1-HCST receptor plays a role in immune surveillance against tumors and is required for cytolysis of tumors cells; indeed, melanoma cells that do not express KLRK1 ligands escape from immune surveillance mediated by NK cells. The sequence is that of Hematopoietic cell signal transducer (HCST) from Homo sapiens (Human).